Here is a 371-residue protein sequence, read N- to C-terminus: Queuine tRNA-ribosyltransferase (371 aa).

The active-site Proton acceptor is the D89. Substrate-binding positions include 89–93 (DSGGF), D143, Q185, and G212. The segment at 243–249 (GVGKPED) is RNA binding. D262 (nucleophile) is an active-site residue. The interval 267–271 (TRNAR) is RNA binding; important for wobble base 34 recognition. Zn(2+)-binding residues include C300, C302, C305, and H331.

This sequence belongs to the queuine tRNA-ribosyltransferase family. Homodimer. Within each dimer, one monomer is responsible for RNA recognition and catalysis, while the other monomer binds to the replacement base PreQ1. Zn(2+) serves as cofactor.

The catalysed reaction is 7-aminomethyl-7-carbaguanine + guanosine(34) in tRNA = 7-aminomethyl-7-carbaguanosine(34) in tRNA + guanine. It participates in tRNA modification; tRNA-queuosine biosynthesis. Its function is as follows. Catalyzes the base-exchange of a guanine (G) residue with the queuine precursor 7-aminomethyl-7-deazaguanine (PreQ1) at position 34 (anticodon wobble position) in tRNAs with GU(N) anticodons (tRNA-Asp, -Asn, -His and -Tyr). Catalysis occurs through a double-displacement mechanism. The nucleophile active site attacks the C1' of nucleotide 34 to detach the guanine base from the RNA, forming a covalent enzyme-RNA intermediate. The proton acceptor active site deprotonates the incoming PreQ1, allowing a nucleophilic attack on the C1' of the ribose to form the product. After dissociation, two additional enzymatic reactions on the tRNA convert PreQ1 to queuine (Q), resulting in the hypermodified nucleoside queuosine (7-(((4,5-cis-dihydroxy-2-cyclopenten-1-yl)amino)methyl)-7-deazaguanosine). This is Queuine tRNA-ribosyltransferase from Pseudomonas syringae pv. tomato (strain ATCC BAA-871 / DC3000).